The chain runs to 600 residues: PWWP domain-containing protein 2B (600 aa).

5 disordered regions span residues 81-115, 143-171, 186-350, 366-408, and 426-477; these read ETGP…PVPA, WVPQ…LILS, KSTV…LGDG, GCPR…PQGK, and DCTS…TVPP. Residues 104 to 115 are compositionally biased toward pro residues; it reads EPPPPLIPPVPA. The span at 151-160 shows a compositional bias: basic residues; that stretch reads TIKRTRRRLS. The span at 187–200 shows a compositional bias: polar residues; that stretch reads STVSPQEASPSPLN. Phosphoserine is present on residues serine 190 and serine 210. Residues 239–252 are compositionally biased toward basic and acidic residues; that stretch reads EKREEDRVAGERVP. Serine 254 carries the phosphoserine modification. Residues 286–297 show a composition bias toward polar residues; sequence PQQSLQNGSQDS. Positions 298–309 are enriched in basic and acidic residues; that stretch reads EVSRDVEPRGGG. Residues 328–339 show a composition bias toward pro residues; the sequence is PVPPISDLPPPK. A compositionally biased stretch (low complexity) spans 381–395; that stretch reads DGSSHGLEDLSSGSS. Positions 443-456 are enriched in polar residues; sequence SSGSEVTSPDTGDL. Serine 457 bears the Phosphoserine mark. Residues 457–468 are compositionally biased toward low complexity; it reads SSGDSASVPSSS. The PWWP domain occupies 500–560; that stretch reads VGDIVWGKIH…ISKLSPFSEF (61 aa).

In terms of assembly, component of a MTA1-specific subcomplex of the NuRD complex composed of PWWP2B, MTA1 and HDAC1 but does not contain CHD4 and MBD3. Interacts with MTA1, MTA2, MTA3, HDAC1, HDAC2, RBBP4, RBBP7, BRCC3 and ZNF516. Does not interact with CHD4 and MBD3. Post-translationally, deubiquitinated by BRCC3; leading to its stabilization. Expressed in the brown adipose tissue.

The protein resides in the nucleus. Its function is as follows. Chromatin-binding protein that acts as an adapter between distinct nucleosome components (H3K36me3 or H2A.Z) and chromatin-modifying complexes, contributing to the regulation of the levels of histone acetylation at actively transcribed genes. Competes with CHD4 and MBD3 for interaction with MTA1 to form a NuRD subcomplex, preventing the formation of full NuRD complex (containing CHD4 and MBD3), leading to recruitment of HDACs to gene promoters resulting in turn in the deacetylation of nearby H3K27 and H2A.Z. Plays a role in facilitating transcriptional elongation through regulation of histone acetylation. Negatively regulates brown adipocyte thermogenesis by interacting with and stabilizing HDAC1 at the UCP1 gene promoter, thereby promoting histone deacetylation at the promoter leading to the repression of UCP1 expression. This is PWWP domain-containing protein 2B (Pwwp2b) from Mus musculus (Mouse).